The following is a 568-amino-acid chain: 2-succinyl-5-enolpyruvyl-6-hydroxy-3-cyclohexene-1-carboxylate synthase (568 aa).

Belongs to the TPP enzyme family. MenD subfamily. As to quaternary structure, homodimer. It depends on Mg(2+) as a cofactor. Mn(2+) serves as cofactor. Thiamine diphosphate is required as a cofactor.

It catalyses the reaction isochorismate + 2-oxoglutarate + H(+) = 5-enolpyruvoyl-6-hydroxy-2-succinyl-cyclohex-3-ene-1-carboxylate + CO2. It participates in quinol/quinone metabolism; 1,4-dihydroxy-2-naphthoate biosynthesis; 1,4-dihydroxy-2-naphthoate from chorismate: step 2/7. The protein operates within quinol/quinone metabolism; menaquinone biosynthesis. In terms of biological role, catalyzes the thiamine diphosphate-dependent decarboxylation of 2-oxoglutarate and the subsequent addition of the resulting succinic semialdehyde-thiamine pyrophosphate anion to isochorismate to yield 2-succinyl-5-enolpyruvyl-6-hydroxy-3-cyclohexene-1-carboxylate (SEPHCHC). This Haemophilus influenzae (strain PittEE) protein is 2-succinyl-5-enolpyruvyl-6-hydroxy-3-cyclohexene-1-carboxylate synthase.